Consider the following 508-residue polypeptide: ATP synthase subunit alpha, chloroplastic (508 aa).

Residue 172–179 participates in ATP binding; it reads GDRQTGKT.

Belongs to the ATPase alpha/beta chains family. In terms of assembly, F-type ATPases have 2 components, CF(1) - the catalytic core - and CF(0) - the membrane proton channel. CF(1) has five subunits: alpha(3), beta(3), gamma(1), delta(1), epsilon(1). CF(0) has four main subunits: a, b, b' and c.

Its subcellular location is the plastid. It is found in the chloroplast thylakoid membrane. The enzyme catalyses ATP + H2O + 4 H(+)(in) = ADP + phosphate + 5 H(+)(out). Produces ATP from ADP in the presence of a proton gradient across the membrane. The alpha chain is a regulatory subunit. The chain is ATP synthase subunit alpha, chloroplastic from Psilotum nudum (Whisk fern).